The following is a 138-amino-acid chain: Ribulose bisphosphate carboxylase small subunit (138 aa).

Belongs to the RuBisCO small chain family. Heterohexadecamer of 8 large and 8 small subunits.

Its subcellular location is the plastid. The protein localises to the chloroplast. In terms of biological role, ruBisCO catalyzes two reactions: the carboxylation of D-ribulose 1,5-bisphosphate, the primary event in carbon dioxide fixation, as well as the oxidative fragmentation of the pentose substrate in the photorespiration process. Both reactions occur simultaneously and in competition at the same active site. Although the small subunit is not catalytic it is essential for maximal activity. This Porphyra purpurea (Red seaweed) protein is Ribulose bisphosphate carboxylase small subunit.